The sequence spans 64 residues: Transcription factor P13 (64 aa).

In terms of biological role, transcription factor that regulates expression of phage structural components with protein P14. This chain is Transcription factor P13, found in Pseudoalteromonas phage PM2 (Bacteriophage PM2).